Here is a 414-residue protein sequence, read N- to C-terminus: Glucose-1-phosphate adenylyltransferase (414 aa).

Residues Y103, G168, E183 to K184, and S201 each bind alpha-D-glucose 1-phosphate.

This sequence belongs to the bacterial/plant glucose-1-phosphate adenylyltransferase family. Homotetramer.

It catalyses the reaction alpha-D-glucose 1-phosphate + ATP + H(+) = ADP-alpha-D-glucose + diphosphate. It participates in glycan biosynthesis; glycogen biosynthesis. Functionally, involved in the biosynthesis of ADP-glucose, a building block required for the elongation reactions to produce glycogen. Catalyzes the reaction between ATP and alpha-D-glucose 1-phosphate (G1P) to produce pyrophosphate and ADP-Glc. This chain is Glucose-1-phosphate adenylyltransferase, found in Thermus thermophilus (strain ATCC 27634 / DSM 579 / HB8).